Here is a 127-residue protein sequence, read N- to C-terminus: Protein ApaG (127 aa).

Residues 3–127 (ANSPPTIKCN…FRLAIPNILH (125 aa)) form the ApaG domain.

The polypeptide is Protein ApaG (Photobacterium profundum (strain SS9)).